We begin with the raw amino-acid sequence, 284 residues long: uncharacterized protein (284 aa).

The chain crosses the membrane as a helical span at residues 9–28 (IILRWVVTLYIYGFILYQIT).

The protein resides in the membrane. This is an uncharacterized protein from Aquifex aeolicus (strain VF5).